Here is a 398-residue protein sequence, read N- to C-terminus: Sphingosine 1-phosphate receptor 5 (398 aa).

The Extracellular segment spans residues 1-40; the sequence is MESGLLRPAPVSEVIVLHYNYTGKLRGARYQPGAGLRADA. Residue N20 is glycosylated (N-linked (GlcNAc...) asparagine). Residues 41–61 traverse the membrane as a helical segment; the sequence is VVCLAVCAFIVLENLAVLLVL. Topologically, residues 62-70 are cytoplasmic; that stretch reads GRHPRFHAP. Residues 71 to 91 traverse the membrane as a helical segment; it reads MFLLLGSLTLSDLLAGAAYAA. Topologically, residues 92 to 111 are extracellular; that stretch reads NILLSGPLTLKLSPALWFAR. A helical membrane pass occupies residues 112–132; sequence EGGVFVALTASVLSLLAIALE. The Cytoplasmic segment spans residues 133–151; sequence RSLTMARRGPAPVSSRGRT. A helical membrane pass occupies residues 152-172; it reads LAMAAAAWGVSLLLGLLPALG. Residues 173–192 lie on the Extracellular side of the membrane; sequence WNCLGRLDACSTVLPLYAKA. The helical transmembrane segment at 193-213 threads the bilayer; it reads YVLFCVLAFVGILAAICALYA. The Cytoplasmic portion of the chain corresponds to 214–252; sequence RIYCQVRANARRLPARPGTAGTTSTRARRKPRSLALLRT. The helical transmembrane segment at 253 to 273 threads the bilayer; it reads LSVVLLAFVACWGPLFLLLLL. The Extracellular segment spans residues 274-287; sequence DVACPARTCPVLLQ. Residues 288–308 traverse the membrane as a helical segment; sequence ADPFLGLAMANSLLNPIIYTL. Residues 309-398 lie on the Cytoplasmic side of the membrane; sequence TNRDLRHALL…RTLVSEPAAD (90 aa). C323 carries the S-palmitoyl cysteine lipid modification. The disordered stretch occupies residues 329 to 398; sequence GRDPSGSQQS…RTLVSEPAAD (70 aa). Residues 333 to 347 show a composition bias toward low complexity; the sequence is SGSQQSASAAEASGG. S381 carries the phosphoserine modification.

This sequence belongs to the G-protein coupled receptor 1 family. Widely expressed in the brain, most prominently in the corpus callosum, which is predominantly white matter. Detected in spleen, peripheral blood leukocytes, placenta, lung, aorta and fetal spleen. Low-level signal detected in many tissue extracts. Overexpressed in leukemic large granular lymphocytes. Isoform 1 is predominantly expressed in peripheral tissues. Isoform 2 is expressed in brain, spleen and peripheral blood leukocytes.

It localises to the cell membrane. Receptor for the lysosphingolipid sphingosine 1-phosphate (S1P). S1P is a bioactive lysophospholipid that elicits diverse physiological effect on most types of cells and tissues. Is coupled to both the G(i/0)alpha and G(12) subclass of heteromeric G-proteins. May play a regulatory role in the transformation of radial glial cells into astrocytes and may affect proliferative activity of these cells. This chain is Sphingosine 1-phosphate receptor 5 (S1PR5), found in Homo sapiens (Human).